The sequence spans 181 residues: Translation initiation factor IF-3 (181 aa).

This sequence belongs to the IF-3 family. As to quaternary structure, monomer.

It is found in the cytoplasm. Its function is as follows. IF-3 binds to the 30S ribosomal subunit and shifts the equilibrium between 70S ribosomes and their 50S and 30S subunits in favor of the free subunits, thus enhancing the availability of 30S subunits on which protein synthesis initiation begins. The polypeptide is Translation initiation factor IF-3 (Pseudoalteromonas translucida (strain TAC 125)).